The chain runs to 495 residues: Meiosis-specific nuclear structural protein 1 (495 aa).

Residues 1–314 (MGSKRRNLSC…KLEEMLRQRE (314 aa)) form an interaction with BBOF1 region. Residues 28 to 410 (VQALKNVNSQ…QLEHRRAVEK (383 aa)) adopt a coiled-coil conformation. At Y188 the chain carries Phosphotyrosine.

Belongs to the MNS1 family. In terms of assembly, able to form oligomers. Microtubule inner protein component of sperm flagellar doublet microtubules. Interacts with ODAD1. Interacts with BBOF1. As to expression, expressed in nasal respiratory epithelium and in the sperm.

It is found in the nucleus. Its subcellular location is the cytoplasm. It localises to the cytoskeleton. The protein resides in the cilium axoneme. The protein localises to the flagellum axoneme. Functionally, microtubule inner protein (MIP) part of the dynein-decorated doublet microtubules (DMTs) in cilia axoneme, which is required for motile cilia beating. May play a role in the control of meiotic division and germ cell differentiation through regulation of pairing and recombination during meiosis. Required for sperm flagella assembly. May play a role in the assembly and function of the outer dynein arm-docking complex (ODA-DC). ODA-DC mediates outer dynein arms (ODA) binding onto the axonemal doublet microtubules. In Homo sapiens (Human), this protein is Meiosis-specific nuclear structural protein 1.